Reading from the N-terminus, the 158-residue chain is GAF domain-containing protein A (158 aa).

The GAF domain occupies 32-158 (NQIANLANVT…LTQILKLLDN (127 aa)).

The protein belongs to the free Met sulfoxide reductase family.

The polypeptide is GAF domain-containing protein A (gafA) (Dictyostelium discoideum (Social amoeba)).